An 801-amino-acid polypeptide reads, in one-letter code: Putative mRNA-capping enzyme P5 (801 aa).

It belongs to the phytoreovirus protein P5 family.

It localises to the virion. Its subcellular location is the host cytoplasm. It carries out the reaction a 5'-end diphospho-ribonucleoside in mRNA + GTP + H(+) = a 5'-end (5'-triphosphoguanosine)-ribonucleoside in mRNA + diphosphate. Its pathway is mRNA processing; mRNA capping. In terms of biological role, enzyme involved in mRNA capping (Potential). Binds to GTP and might have guanylyltransferase activity. Together with the RNA-directed RNA polymerase P1 and protein P7, forms an transcriptional complex positioned near the channels situated at each of the five-fold vertices of the core. The sequence is that of Putative mRNA-capping enzyme P5 from Alopecurus aequalis (Barnyard grass).